Consider the following 398-residue polypeptide: 1-deoxy-D-xylulose 5-phosphate reductoisomerase (398 aa).

8 residues coordinate NADPH: Thr10, Gly11, Ser12, Val13, Gly36, Lys37, Asn38, and Asn124. Residue Lys125 coordinates 1-deoxy-D-xylulose 5-phosphate. Residue Glu126 participates in NADPH binding. Asp150 is a Mn(2+) binding site. Ser151, Glu152, Ser186, and His209 together coordinate 1-deoxy-D-xylulose 5-phosphate. Glu152 is a Mn(2+) binding site. Position 215 (Gly215) interacts with NADPH. 4 residues coordinate 1-deoxy-D-xylulose 5-phosphate: Ser222, Asn227, Lys228, and Glu231. Mn(2+) is bound at residue Glu231.

Belongs to the DXR family. Homodimer. Mg(2+) serves as cofactor. The cofactor is Mn(2+).

The catalysed reaction is 2-C-methyl-D-erythritol 4-phosphate + NADP(+) = 1-deoxy-D-xylulose 5-phosphate + NADPH + H(+). The protein operates within isoprenoid biosynthesis; isopentenyl diphosphate biosynthesis via DXP pathway; isopentenyl diphosphate from 1-deoxy-D-xylulose 5-phosphate: step 1/6. Its function is as follows. Catalyzes the NADPH-dependent rearrangement and reduction of 1-deoxy-D-xylulose-5-phosphate (DXP) to 2-C-methyl-D-erythritol 4-phosphate (MEP). The chain is 1-deoxy-D-xylulose 5-phosphate reductoisomerase from Photorhabdus laumondii subsp. laumondii (strain DSM 15139 / CIP 105565 / TT01) (Photorhabdus luminescens subsp. laumondii).